The primary structure comprises 249 residues: Triosephosphate isomerase (249 aa).

Residue 9-11 coordinates substrate; the sequence is NWK. H95 functions as the Electrophile in the catalytic mechanism. E166 (proton acceptor) is an active-site residue. Residues G172, S211, and 232–233 each bind substrate; that span reads GG.

The protein belongs to the triosephosphate isomerase family. In terms of assembly, homodimer.

It is found in the cytoplasm. The enzyme catalyses D-glyceraldehyde 3-phosphate = dihydroxyacetone phosphate. It participates in carbohydrate biosynthesis; gluconeogenesis. It functions in the pathway carbohydrate degradation; glycolysis; D-glyceraldehyde 3-phosphate from glycerone phosphate: step 1/1. Involved in the gluconeogenesis. Catalyzes stereospecifically the conversion of dihydroxyacetone phosphate (DHAP) to D-glyceraldehyde-3-phosphate (G3P). The polypeptide is Triosephosphate isomerase (Legionella pneumophila subsp. pneumophila (strain Philadelphia 1 / ATCC 33152 / DSM 7513)).